A 225-amino-acid polypeptide reads, in one-letter code: Orotate phosphoribosyltransferase (225 aa).

Position 29 (lysine 29) interacts with 5-phospho-alpha-D-ribose 1-diphosphate. 37 to 38 (FF) is a binding site for orotate. Residues 75 to 76 (YK), arginine 105, lysine 106, lysine 109, histidine 111, and 130 to 138 (DDVITAGTS) each bind 5-phospho-alpha-D-ribose 1-diphosphate. 2 residues coordinate orotate: threonine 134 and arginine 162.

The protein belongs to the purine/pyrimidine phosphoribosyltransferase family. PyrE subfamily. As to quaternary structure, homodimer. It depends on Mg(2+) as a cofactor.

It catalyses the reaction orotidine 5'-phosphate + diphosphate = orotate + 5-phospho-alpha-D-ribose 1-diphosphate. It functions in the pathway pyrimidine metabolism; UMP biosynthesis via de novo pathway; UMP from orotate: step 1/2. Functionally, catalyzes the transfer of a ribosyl phosphate group from 5-phosphoribose 1-diphosphate to orotate, leading to the formation of orotidine monophosphate (OMP). This is Orotate phosphoribosyltransferase from Bordetella petrii (strain ATCC BAA-461 / DSM 12804 / CCUG 43448).